Consider the following 377-residue polypeptide: Flagellar P-ring protein (377 aa).

An N-terminal signal peptide occupies residues 1 to 33 (MRYPVSTGIAAPAWFAFFCAWAGLWTFSLPVQA).

Belongs to the FlgI family. In terms of assembly, the basal body constitutes a major portion of the flagellar organelle and consists of four rings (L,P,S, and M) mounted on a central rod.

It is found in the periplasm. The protein resides in the bacterial flagellum basal body. Functionally, assembles around the rod to form the L-ring and probably protects the motor/basal body from shearing forces during rotation. The sequence is that of Flagellar P-ring protein from Nitrosospira multiformis (strain ATCC 25196 / NCIMB 11849 / C 71).